The chain runs to 73 residues: MSEKEAGIEVQGTVEEALAGGMYRVKVDQGPTVLAYASGKMKKFHIRIIPGDRVKLELSPYDLTRGRITYRDK.

Residues Met-1–Lys-73 enclose the S1-like domain.

This sequence belongs to the IF-1 family. As to quaternary structure, component of the 30S ribosomal translation pre-initiation complex which assembles on the 30S ribosome in the order IF-2 and IF-3, IF-1 and N-formylmethionyl-tRNA(fMet); mRNA recruitment can occur at any time during PIC assembly.

The protein localises to the cytoplasm. In terms of biological role, one of the essential components for the initiation of protein synthesis. Stabilizes the binding of IF-2 and IF-3 on the 30S subunit to which N-formylmethionyl-tRNA(fMet) subsequently binds. Helps modulate mRNA selection, yielding the 30S pre-initiation complex (PIC). Upon addition of the 50S ribosomal subunit IF-1, IF-2 and IF-3 are released leaving the mature 70S translation initiation complex. In Anaeromyxobacter sp. (strain Fw109-5), this protein is Translation initiation factor IF-1.